We begin with the raw amino-acid sequence, 284 residues long: Nucleotide-binding protein PP_0949 (284 aa).

ATP is bound at residue glycine 8–serine 15. Aspartate 60–asparagine 63 contacts GTP.

The protein belongs to the RapZ-like family.

Functionally, displays ATPase and GTPase activities. In Pseudomonas putida (strain ATCC 47054 / DSM 6125 / CFBP 8728 / NCIMB 11950 / KT2440), this protein is Nucleotide-binding protein PP_0949.